Consider the following 87-residue polypeptide: Defensin-like protein 175 (87 aa).

An N-terminal signal peptide occupies residues 1–23 (MAKATSSLVVPIIFLVIFALVEQ). Disulfide bonds link C27–C66, C36–C55, C39–C60, and C43–C62.

It belongs to the DEFL family.

Its subcellular location is the secreted. The chain is Defensin-like protein 175 from Arabidopsis thaliana (Mouse-ear cress).